The primary structure comprises 233 residues: Cell number regulator 8 (233 aa).

2 helical membrane-spanning segments follow: residues 85 to 101 and 115 to 138; these read VCLLGTVAPCVLYGSNV and CLPYTGLYLLGNSLFGWNCLAPWF.

The protein belongs to the cornifelin family. In terms of tissue distribution, expressed in roots, coleoptiles, leaves, stalks, apical meristems, immature ears, embryos, endosperm, pericarp, silks, tassel spikelets and pollen. Highest expression in the pericarp and stalks.

Its subcellular location is the membrane. The polypeptide is Cell number regulator 8 (CNR8) (Zea mays (Maize)).